The primary structure comprises 229 residues: Prolactin (229 aa).

Positions 1–30 (MSNRGASLKGLFLAVLLVSNTLLTKEGVTS) are cleaved as a signal peptide. 3 cysteine pairs are disulfide-bonded: Cys34/Cys41, Cys88/Cys204, and Cys221/Cys229.

The protein belongs to the somatotropin/prolactin family.

The protein localises to the secreted. The chain is Prolactin (PRL) from Gallus gallus (Chicken).